Consider the following 210-residue polypeptide: Nucleoside triphosphate pyrophosphatase (210 aa).

The active-site Proton acceptor is the aspartate 79.

It belongs to the Maf family. A divalent metal cation serves as cofactor.

Its subcellular location is the cytoplasm. The catalysed reaction is a ribonucleoside 5'-triphosphate + H2O = a ribonucleoside 5'-phosphate + diphosphate + H(+). It carries out the reaction a 2'-deoxyribonucleoside 5'-triphosphate + H2O = a 2'-deoxyribonucleoside 5'-phosphate + diphosphate + H(+). Its function is as follows. Nucleoside triphosphate pyrophosphatase. May have a dual role in cell division arrest and in preventing the incorporation of modified nucleotides into cellular nucleic acids. This is Nucleoside triphosphate pyrophosphatase from Mycolicibacterium paratuberculosis (strain ATCC BAA-968 / K-10) (Mycobacterium paratuberculosis).